The following is a 190-amino-acid chain: Cysteine dioxygenase (190 aa).

The Fe cation site is built by His-78, His-80, and His-132. Residues 85–149 (CFVKILDGEL…SNGAVSLHLY (65 aa)) constitute a cross-link (3'-(S-cysteinyl)-tyrosine (Cys-Tyr)).

It belongs to the cysteine dioxygenase family. It depends on Fe cation as a cofactor. The thioether cross-link between Cys-85 and Tyr-149 plays a structural role through stabilizing the Fe(2+) ion, and prevents the production of highly damaging free hydroxyl radicals by holding the oxygen radical via hydroxyl hydrogen.

The enzyme catalyses L-cysteine + O2 = 3-sulfino-L-alanine + H(+). It participates in organosulfur biosynthesis; taurine biosynthesis; hypotaurine from L-cysteine: step 1/2. The polypeptide is Cysteine dioxygenase (cdo-1) (Caenorhabditis briggsae).